The following is a 260-amino-acid chain: Arginine esterase (260 aa).

The first 17 residues, 1-17 (MWFLALCLAMSLGWTGA), serve as a signal peptide directing secretion. A propeptide spans 18–24 (EPHFQPR) (activation peptide). One can recognise a Peptidase S1 domain in the interval 25–257 (IIGGRECLKN…HLMWIKDTMK (233 aa)). Intrachain disulfides connect cysteine 31–cysteine 172, cysteine 50–cysteine 66, cysteine 151–cysteine 218, cysteine 183–cysteine 197, and cysteine 208–cysteine 233. Residue histidine 65 is the Charge relay system of the active site. Asparagine 79 is a glycosylation site (N-linked (GlcNAc...) asparagine). The active-site Charge relay system is aspartate 119. Catalysis depends on serine 212, which acts as the Charge relay system.

Belongs to the peptidase S1 family. Kallikrein subfamily.

The catalysed reaction is Preferential cleavage of Arg-|-Xaa bonds in small molecule substrates. Highly selective action to release kallidin (lysyl-bradykinin) from kininogen involves hydrolysis of Met-|-Xaa or Leu-|-Xaa.. Its function is as follows. This serine protease is found in dog seminal plasma, its exact physiological function is not known. In Canis lupus familiaris (Dog), this protein is Arginine esterase.